The chain runs to 155 residues: Cyanate hydratase (155 aa).

Residues arginine 95, glutamate 98, and serine 121 contribute to the active site.

This sequence belongs to the cyanase family.

It catalyses the reaction cyanate + hydrogencarbonate + 3 H(+) = NH4(+) + 2 CO2. Functionally, catalyzes the reaction of cyanate with bicarbonate to produce ammonia and carbon dioxide. This Pseudomonas savastanoi pv. phaseolicola (strain 1448A / Race 6) (Pseudomonas syringae pv. phaseolicola (strain 1448A / Race 6)) protein is Cyanate hydratase.